The sequence spans 295 residues: Putative ribose uptake protein RbsU (295 aa).

Helical transmembrane passes span 5–24, 34–56, 63–80, 95–114, 121–139, 154–171, 183–205, 220–237, 244–266, and 276–293; these read ALLI…TIAS, ILGT…GLAF, FFSI…IITF, TTAF…LGNW, LLGA…MTVW, AVLL…YSAA, FLPQ…TIKG, IFSG…LISA, LATG…IWFL, and TVTI…TITV.

This sequence belongs to the GRP transporter (TC 2.A.7.5) family.

The protein localises to the cell membrane. Could be involved in the uptake of ribose. The polypeptide is Putative ribose uptake protein RbsU (rbsU) (Enterococcus faecalis (strain ATCC 700802 / V583)).